The following is a 352-amino-acid chain: Photosystem II D2 protein (352 aa).

Thr-2 is modified (N-acetylthreonine). The residue at position 2 (Thr-2) is a Phosphothreonine. A helical membrane pass occupies residues 40–60 (CAYFALGGWLTGTTFVSSWYT). Residue His-117 coordinates chlorophyll a. A helical transmembrane segment spans residues 124-140 (GFMLRQFEIARAVQIRP). Pheophytin a-binding residues include Gln-129 and Asn-142. The chain crosses the membrane as a helical span at residues 152–165 (VFVSVFLIYPLGQS). Chlorophyll a is bound at residue His-197. A helical membrane pass occupies residues 207–227 (AALLCAIHGATVENTLFEDGD). A plastoquinone is bound by residues His-214 and Phe-261. Residue His-214 coordinates Fe cation. His-268 is a binding site for Fe cation. A helical transmembrane segment spans residues 278–294 (GLWMSALGVVGLALNLR).

Belongs to the reaction center PufL/M/PsbA/D family. In terms of assembly, PSII is composed of 1 copy each of membrane proteins PsbA, PsbB, PsbC, PsbD, PsbE, PsbF, PsbH, PsbI, PsbJ, PsbK, PsbL, PsbM, PsbT, PsbX, PsbY, PsbZ, Psb30/Ycf12, at least 3 peripheral proteins of the oxygen-evolving complex and a large number of cofactors. It forms dimeric complexes. Requires The D1/D2 heterodimer binds P680, chlorophylls that are the primary electron donor of PSII, and subsequent electron acceptors. It shares a non-heme iron and each subunit binds pheophytin, quinone, additional chlorophylls, carotenoids and lipids. There is also a Cl(-1) ion associated with D1 and D2, which is required for oxygen evolution. The PSII complex binds additional chlorophylls, carotenoids and specific lipids. as cofactor.

It is found in the plastid. The protein resides in the chloroplast thylakoid membrane. The catalysed reaction is 2 a plastoquinone + 4 hnu + 2 H2O = 2 a plastoquinol + O2. In terms of biological role, photosystem II (PSII) is a light-driven water:plastoquinone oxidoreductase that uses light energy to abstract electrons from H(2)O, generating O(2) and a proton gradient subsequently used for ATP formation. It consists of a core antenna complex that captures photons, and an electron transfer chain that converts photonic excitation into a charge separation. The D1/D2 (PsbA/PsbD) reaction center heterodimer binds P680, the primary electron donor of PSII as well as several subsequent electron acceptors. D2 is needed for assembly of a stable PSII complex. This chain is Photosystem II D2 protein, found in Ostreococcus tauri.